The following is a 376-amino-acid chain: Ribosomal RNA large subunit methyltransferase G (376 aa).

The protein belongs to the methyltransferase superfamily. RlmG family.

The protein resides in the cytoplasm. It catalyses the reaction guanosine(1835) in 23S rRNA + S-adenosyl-L-methionine = N(2)-methylguanosine(1835) in 23S rRNA + S-adenosyl-L-homocysteine + H(+). Its function is as follows. Specifically methylates the guanine in position 1835 (m2G1835) of 23S rRNA. This is Ribosomal RNA large subunit methyltransferase G from Vibrio vulnificus (strain CMCP6).